A 417-amino-acid chain; its full sequence is Serine hydroxymethyltransferase (417 aa).

Residues L121 and 125 to 127 (GHL) each bind (6S)-5,6,7,8-tetrahydrofolate. N6-(pyridoxal phosphate)lysine is present on K229. 355 to 357 (SPF) serves as a coordination point for (6S)-5,6,7,8-tetrahydrofolate.

Belongs to the SHMT family. Homodimer. Requires pyridoxal 5'-phosphate as cofactor.

Its subcellular location is the cytoplasm. It catalyses the reaction (6R)-5,10-methylene-5,6,7,8-tetrahydrofolate + glycine + H2O = (6S)-5,6,7,8-tetrahydrofolate + L-serine. The protein operates within one-carbon metabolism; tetrahydrofolate interconversion. It functions in the pathway amino-acid biosynthesis; glycine biosynthesis; glycine from L-serine: step 1/1. Functionally, catalyzes the reversible interconversion of serine and glycine with tetrahydrofolate (THF) serving as the one-carbon carrier. This reaction serves as the major source of one-carbon groups required for the biosynthesis of purines, thymidylate, methionine, and other important biomolecules. Also exhibits THF-independent aldolase activity toward beta-hydroxyamino acids, producing glycine and aldehydes, via a retro-aldol mechanism. This Proteus mirabilis (strain HI4320) protein is Serine hydroxymethyltransferase.